The primary structure comprises 236 residues: Octanoyltransferase (236 aa).

Residues 36–220 (DQVPDTVLLL…HLAAVLGASS (185 aa)) enclose the BPL/LPL catalytic domain. Substrate contacts are provided by residues 76-83 (RGGKITWH), 150-152 (AIG), and 163-165 (GFA). Residue Cys181 is the Acyl-thioester intermediate of the active site.

The protein belongs to the LipB family.

It localises to the cytoplasm. The catalysed reaction is octanoyl-[ACP] + L-lysyl-[protein] = N(6)-octanoyl-L-lysyl-[protein] + holo-[ACP] + H(+). It participates in protein modification; protein lipoylation via endogenous pathway; protein N(6)-(lipoyl)lysine from octanoyl-[acyl-carrier-protein]: step 1/2. Its function is as follows. Catalyzes the transfer of endogenously produced octanoic acid from octanoyl-acyl-carrier-protein onto the lipoyl domains of lipoate-dependent enzymes. Lipoyl-ACP can also act as a substrate although octanoyl-ACP is likely to be the physiological substrate. This is Octanoyltransferase from Thermobifida fusca (strain YX).